We begin with the raw amino-acid sequence, 547 residues long: Chaperonin GroEL (547 aa).

Residues T30 to P33, K51, D87 to T91, G415, and D496 each bind ATP. The tract at residues S527–F547 is disordered. Gly residues predominate over residues G537–F547.

Belongs to the chaperonin (HSP60) family. As to quaternary structure, forms a cylinder of 14 subunits composed of two heptameric rings stacked back-to-back. Interacts with the co-chaperonin GroES.

The protein resides in the cytoplasm. The enzyme catalyses ATP + H2O + a folded polypeptide = ADP + phosphate + an unfolded polypeptide.. In terms of biological role, together with its co-chaperonin GroES, plays an essential role in assisting protein folding. The GroEL-GroES system forms a nano-cage that allows encapsulation of the non-native substrate proteins and provides a physical environment optimized to promote and accelerate protein folding. The chain is Chaperonin GroEL from Rickettsia africae (strain ESF-5).